Reading from the N-terminus, the 192-residue chain is UPF0149 protein VP2588 (192 aa).

The protein belongs to the UPF0149 family.

The polypeptide is UPF0149 protein VP2588 (Vibrio parahaemolyticus serotype O3:K6 (strain RIMD 2210633)).